A 199-amino-acid polypeptide reads, in one-letter code: Ribonuclease HII (199 aa).

One can recognise an RNase H type-2 domain in the interval 9–198 (QFVAGVDEVG…VRAAIEQMNL (190 aa)). A divalent metal cation contacts are provided by Asp15, Glu16, and Asp107.

This sequence belongs to the RNase HII family. The cofactor is Mn(2+). Requires Mg(2+) as cofactor.

It is found in the cytoplasm. The enzyme catalyses Endonucleolytic cleavage to 5'-phosphomonoester.. Functionally, endonuclease that specifically degrades the RNA of RNA-DNA hybrids. This chain is Ribonuclease HII, found in Saccharophagus degradans (strain 2-40 / ATCC 43961 / DSM 17024).